A 691-amino-acid polypeptide reads, in one-letter code: MEESPLSRAPSRGGVNFLNVARTYIPNTKVECHYTLPPGTMPSASDWIGIFKVEAACVRDYHTFVWSSVPESTADGSPIHTSVQFQASYLPKPGAQLYQFRYVNRQGRVCGQSPPFQFREPRPMDELVTLEEADGSSDILLVVPKATVLQNQLDESQQERNDLMQLKLQLEGQVTELRSRVQELERALATARQEHTELMEQYKGISRSHGEITEERDILSRQQGDHVARILELEDDIQTISEKVLTKEVELDRLRDTVKALTREQEKLLGQLKEVQADKEQSEAELQVAQQENHRLNLDLKEAKSWQKEQSAQAQRLKDKVAQMKDTLGQAQQRVAELEPLKEQLRGAQELATSSQQKATLLGEELASAAAARDRTIAELHRSRLEVAEVNGRLAELGLHLKEEKCQWSKERAGLLQSVEAEKDKILKLSAEILRLEKAVQEERTQNHVFKTELAREKDSSLVQLSESKRELTELRSALRVLQKEKEQLQEEKQELLEYMRKLEARLEKVADEKWNEDATTEDEEATAGLSCPAALTDSEDESPEDMRLPPYGLCEHGDPGSSPAGPREASPLVVISQPAPISPHLSGPAEDSSSDSEAEDEKSVLMAAVQSGGEEANLLLPELGNAFYDMASGFTVGPLSETSTGGPATPTWKECPICKERFPAESDKDALEDHMDGHFFFSTQDPFTFE.

The segment at 1–30 (MEESPLSRAPSRGGVNFLNVARTYIPNTKV) is p300 KIX-binding. The interval 1 to 190 (MEESPLSRAP…VQELERALAT (190 aa)) is N-terminal AD (CTNNB1 binding site). Serine 4 is modified (phosphoserine). Positions 45 to 125 (SDWIGIFKVE…FQFREPRPMD (81 aa)) are interaction with GATA1. 3 coiled-coil regions span residues 145–205 (KATV…YKGI), 232–339 (ELED…AELE), and 417–514 (QSVE…ADEK). Residues 501-691 (RKLEARLEKV…FSTQDPFTFE (191 aa)) are C-terminal AD (CTNNB1 binding site); interaction with CCAR1. Residues 513–604 (EKWNEDATTE…SDSEAEDEKS (92 aa)) are disordered. The UBZ1-type zinc-finger motif lies at 653–679 (WKECPICKERFPAESDKDALEDHMDGH). Cysteine 656, cysteine 659, histidine 675, and histidine 679 together coordinate Zn(2+).

Belongs to the CALCOCO family. Part of a calphoglin complex consisting of CALCOCO1, PPA1 and PGM. Interacts with the bHLH-PAS domains of GRIP1, AHR and ARNT. Interacts with CTNNB1 via both its N- and C-terminal regions. Interacts with EP300. Interacts with CCAR1 (via N-terminus) and GATA1.

Its subcellular location is the cytoplasm. The protein resides in the nucleus. Functions as a coactivator for aryl hydrocarbon and nuclear receptors (NR). Recruited to promoters through its contact with the N-terminal basic helix-loop-helix-Per-Arnt-Sim (PAS) domain of transcription factors or coactivators, such as NCOA2. During ER-activation acts synergistically in combination with other NCOA2-binding proteins, such as EP300, CREBBP and CARM1. Involved in the transcriptional activation of target genes in the Wnt/CTNNB1 pathway. Functions as a secondary coactivator in LEF1-mediated transcriptional activation via its interaction with CTNNB1. Coactivator function for nuclear receptors and LEF1/CTNNB1 involves differential utilization of two different activation regions. In association with CCAR1 enhances GATA1- and MED1-mediated transcriptional activation from the gamma-globin promoter during erythroid differentiation of K562 erythroleukemia cells. Functionally, seems to enhance inorganic pyrophosphatase thus activating phosphogluomutase (PMG). Probably functions as a component of the calphoglin complex, which is involved in linking cellular metabolism (phosphate and glucose metabolism) with other core functions including protein synthesis and degradation, calcium signaling and cell growth. In Pongo abelii (Sumatran orangutan), this protein is Calcium-binding and coiled-coil domain-containing protein 1 (CALCOCO1).